The following is an 814-amino-acid chain: ATP-dependent RNA helicase dbp-7 (814 aa).

Residues 26 to 102 (GGRWRDRVKA…PPPPPTHAMK (77 aa)) form a disordered region. Composition is skewed to basic and acidic residues over residues 28–42 (RWRD…EKGG) and 69–78 (QRTEDGDSGR). The Q motif signature appears at 145 to 174 (ENFLSLGLSRRVSQHLATKLEMKAPTAIQK). Residues 178–384 (PQLVKEDSDA…EISLEDAVHI (207 aa)) form the Helicase ATP-binding domain. Residue 191–198 (AETGSGKT) coordinates ATP. Positions 313-316 (DEGD) match the DEAD box motif. A Helicase C-terminal domain is found at 422-622 (RLVTLIALLK…GFATNINVPG (201 aa)). 3 disordered regions span residues 464–483 (TPRA…KPNI), 662–695 (ESKS…PLLV), and 741–795 (GIGG…AGRR). A compositionally biased stretch (basic and acidic residues) spans 467 to 477 (AEPEPKPEGEA). Residues 779–790 (DDDERDFGAADE) are compositionally biased toward acidic residues.

This sequence belongs to the DEAD box helicase family. DDX31/DBP7 subfamily.

Its subcellular location is the nucleus. It localises to the nucleolus. It carries out the reaction ATP + H2O = ADP + phosphate + H(+). Functionally, ATP-binding RNA helicase involved in the biogenesis of 60S ribosomal subunits and is required for the normal formation of 25S and 5.8S rRNAs. The chain is ATP-dependent RNA helicase dbp-7 (dbp-7) from Neurospora crassa (strain ATCC 24698 / 74-OR23-1A / CBS 708.71 / DSM 1257 / FGSC 987).